A 106-amino-acid polypeptide reads, in one-letter code: SDO1-like protein C21C3.19 (106 aa).

It belongs to the SDO1-like family.

It is found in the cytoplasm. The protein resides in the nucleus. May play a role in RNA metabolism. The sequence is that of SDO1-like protein C21C3.19 from Schizosaccharomyces pombe (strain 972 / ATCC 24843) (Fission yeast).